The primary structure comprises 132 residues: MSKSSLSKSQSCQNEEMPLCDQPLVHLEQVRQVQPEVMSLDQAQQMAEFFSALADPSRLRLMSALARQELCVCDLAAAMKVSESAVSHQLRILRSQRLVKYRRVGRNVYYSLADNHVMNLYREVADHLQESD.

Positions 20, 26, 71, 73, 114, 116, 127, and 130 each coordinate Zn(2+). The 95-residue stretch at 38–132 (MSLDQAQQMA…EVADHLQESD (95 aa)) folds into the HTH arsR-type domain. A DNA-binding region (H-T-H motif) is located at residues 72 to 91 (VCDLAAAMKVSESAVSHQLR).

As to quaternary structure, homodimer.

Its function is as follows. Transcriptional repressor of the expression of the ziaA gene. Controls zinc homeostasis by triggering ZiaA-mediated efflux of excess zinc into the periplasm. The sequence is that of Transcriptional repressor SmtB homolog (ziaR) from Synechocystis sp. (strain ATCC 27184 / PCC 6803 / Kazusa).